Consider the following 108-residue polypeptide: UPF0235 protein RB8260 (108 aa).

This sequence belongs to the UPF0235 family.

In Rhodopirellula baltica (strain DSM 10527 / NCIMB 13988 / SH1), this protein is UPF0235 protein RB8260.